Consider the following 90-residue polypeptide: Neuropeptide-like 3 (90 aa).

The N-terminal stretch at M1–A16 is a signal peptide. 2 consecutive propeptides follow at residues A17–Q54 and A67–K79. Isoleucine amide is present on I89.

It localises to the secreted. The polypeptide is Neuropeptide-like 3 (Nplp3) (Drosophila melanogaster (Fruit fly)).